The primary structure comprises 311 residues: MICKNTFVDYPTTQVRKERVHTYRTLTSATPSLEFFSNENTNRLSEVQCKLTHFLSSSENSSSVRNTRTHKFKQLLHYIFFSNRSSSVLGKQNVHNSQTLGSVSFCEKHAIDINYSENVNKQLNFESHLDDQTCSKRFYFNEQSGSDRYSLKCDSDTDSSTYFGDSASETCSSASNSLYKQTDLTSLCMFNQNKIQTDWSSIDPMDNDKIVCADFEKNFNILKELLNNTKDNGIDQQIVHKEHISHLEKIWKNINEESSEDPSLLLLRLEFLLTDLQTAIRKYSDTVSTNSVNEAFFDKIKIELQAFGVLV.

Its subcellular location is the cytoplasm. The protein resides in the nucleus. Functionally, has a role in sporulation. In Schizosaccharomyces pombe (strain 972 / ATCC 24843) (Fission yeast), this protein is Meiotically up-regulated gene 146 protein (mug146).